Reading from the N-terminus, the 344-residue chain is Inositol 2-dehydrogenase/D-chiro-inositol 3-dehydrogenase (344 aa).

Belongs to the Gfo/Idh/MocA family. Homotetramer.

The catalysed reaction is myo-inositol + NAD(+) = scyllo-inosose + NADH + H(+). It carries out the reaction 1D-chiro-inositol + NAD(+) = scyllo-inosine + NADH + H(+). It functions in the pathway polyol metabolism; myo-inositol degradation into acetyl-CoA; acetyl-CoA from myo-inositol: step 1/7. Involved in the oxidation of myo-inositol (MI) and D-chiro-inositol (DCI) to 2-keto-myo-inositol (2KMI or 2-inosose) and 1-keto-D-chiro-inositol (1KDCI), respectively. Can also use D-glucose and D-xylose, and shows a trace of activity with D-ribose and D-fructose. The polypeptide is Inositol 2-dehydrogenase/D-chiro-inositol 3-dehydrogenase (iolG) (Bacillus subtilis (strain 168)).